A 246-amino-acid polypeptide reads, in one-letter code: U2 small nuclear ribonucleoprotein A' (246 aa).

LRR repeat units follow at residues R19–R40, Q42–Q63, Q64–S85, and A88–S109. An LRRCT domain is found at T122–L160.

It belongs to the U2 small nuclear ribonucleoprotein A family. As to quaternary structure, associated with the spliceosome.

The protein localises to the nucleus. Its function is as follows. Involved in pre-mRNA splicing. The protein is U2 small nuclear ribonucleoprotein A' (LEA1) of Mycosarcoma maydis (Corn smut fungus).